We begin with the raw amino-acid sequence, 1040 residues long: Multidrug resistance protein MdtB (1040 aa).

Transmembrane regions (helical) follow at residues 25 to 45 (LLMAAILLAGIIGYRFLPVAA), 347 to 367 (LMLAIALVVMIIYLFLRNIPA), 369 to 389 (IIPGVAVPLSLIGTFAVMVFL), 396 to 416 (LTLMALTIATGFVVDDAIVVI), 440 to 460 (IGFTIISLTFSLIAVLIPLLF), 472 to 492 (FAVTLAVAILISAVVSLTLTP), 537 to 557 (WLTLSVAFATLLLSVMLWIVI), 863 to 883 (LGSTVWLIVAAVVAMYIVLGV), 888 to 908 (FIHPITILSTLPTAGVGALLA), 910 to 930 (IIAGSELDIIAIIGIILLIGI), 968 to 988 (ILMTTLAALLGALPLMLSTGV), and 998 to 1018 (IAMVGGLLVSQVLTLFTTPVI).

Belongs to the resistance-nodulation-cell division (RND) (TC 2.A.6) family. MdtB subfamily. In terms of assembly, part of a tripartite efflux system composed of MdtA, MdtB and MdtC. MdtB forms a heteromultimer with MdtC.

It localises to the cell inner membrane. In Salmonella agona (strain SL483), this protein is Multidrug resistance protein MdtB.